The primary structure comprises 156 residues: Small ribosomal subunit protein uS7 (156 aa).

Belongs to the universal ribosomal protein uS7 family. Part of the 30S ribosomal subunit. Contacts proteins S9 and S11.

One of the primary rRNA binding proteins, it binds directly to 16S rRNA where it nucleates assembly of the head domain of the 30S subunit. Is located at the subunit interface close to the decoding center, probably blocks exit of the E-site tRNA. The sequence is that of Small ribosomal subunit protein uS7 from Bacillus cytotoxicus (strain DSM 22905 / CIP 110041 / 391-98 / NVH 391-98).